The following is a 560-amino-acid chain: Protein SINE1 (560 aa).

Position 2 is an N-acetylglycine (glycine 2). Residues 7–287 (PILRQELANL…VRGAAYEAMM (281 aa)) are ARMADILLO-type fold. Residues 517-560 (KKKKKKMSYAKLVIAISFVVVALFATVILMVNQDDDVGYYTVPT) enclose the KASH domain. A helical membrane pass occupies residues 528–548 (LVIAISFVVVALFATVILMVN). Residues 557–560 (TVPT) carry the Required for nuclear localization motif.

In terms of assembly, interacts with SUN1 and SUN2. Binds to F-actin. Preferentially expressed in guards cells, but also detected in root cells.

It localises to the nucleus membrane. Functionally, plays a role in nucleus positioning in guard cells. In Arabidopsis thaliana (Mouse-ear cress), this protein is Protein SINE1.